Here is a 539-residue protein sequence, read N- to C-terminus: Glucans biosynthesis protein D (539 aa).

Residues methionine 1 to alanine 31 constitute a signal peptide (tat-type signal).

Belongs to the OpgD/OpgG family. In terms of processing, predicted to be exported by the Tat system. The position of the signal peptide cleavage has not been experimentally proven.

The protein localises to the periplasm. It functions in the pathway glycan metabolism; osmoregulated periplasmic glucan (OPG) biosynthesis. Its function is as follows. Probably involved in the control of the structural glucose backbone of osmoregulated periplasmic glucans (OPGs). The protein is Glucans biosynthesis protein D of Pseudomonas fluorescens (strain ATCC BAA-477 / NRRL B-23932 / Pf-5).